The following is a 236-amino-acid chain: 2-C-methyl-D-erythritol 4-phosphate cytidylyltransferase (236 aa).

It belongs to the IspD/TarI cytidylyltransferase family. IspD subfamily. In terms of assembly, homodimer.

It catalyses the reaction 2-C-methyl-D-erythritol 4-phosphate + CTP + H(+) = 4-CDP-2-C-methyl-D-erythritol + diphosphate. It participates in isoprenoid biosynthesis; isopentenyl diphosphate biosynthesis via DXP pathway; isopentenyl diphosphate from 1-deoxy-D-xylulose 5-phosphate: step 2/6. Catalyzes the formation of 4-diphosphocytidyl-2-C-methyl-D-erythritol from CTP and 2-C-methyl-D-erythritol 4-phosphate (MEP). The protein is 2-C-methyl-D-erythritol 4-phosphate cytidylyltransferase of Salmonella newport (strain SL254).